A 360-amino-acid chain; its full sequence is Isopentenyl-diphosphate delta-isomerase (360 aa).

Substrate is bound at residue 6-7 (RK). FMN-binding positions include Thr62, 63 to 65 (GMT), Ser93, and Asn122. 93–95 (SQR) is a substrate binding site. Gln157 serves as a coordination point for substrate. Glu158 lines the Mg(2+) pocket. FMN contacts are provided by residues Lys189, Ser214, Thr219, 272-274 (GIR), and 293-294 (AL).

This sequence belongs to the IPP isomerase type 2 family. Homooctamer. Dimer of tetramers. The cofactor is FMN. It depends on NADPH as a cofactor. Mg(2+) serves as cofactor.

It localises to the cytoplasm. It carries out the reaction isopentenyl diphosphate = dimethylallyl diphosphate. Functionally, involved in the biosynthesis of isoprenoids. Catalyzes the 1,3-allylic rearrangement of the homoallylic substrate isopentenyl (IPP) to its allylic isomer, dimethylallyl diphosphate (DMAPP). The polypeptide is Isopentenyl-diphosphate delta-isomerase (Ignicoccus hospitalis (strain KIN4/I / DSM 18386 / JCM 14125)).